We begin with the raw amino-acid sequence, 144 residues long: Small ribosomal subunit protein bS6 (144 aa).

A disordered region spans residues 99–144 (KASPLAPCEEKGEEGKAEDAADELTTFGMADDDDLGDDDDTVEAGI). The span at 106-117 (CEEKGEEGKAED) shows a compositional bias: basic and acidic residues. Residues 128–144 (ADDDDLGDDDDTVEAGI) are compositionally biased toward acidic residues.

This sequence belongs to the bacterial ribosomal protein bS6 family.

Functionally, binds together with bS18 to 16S ribosomal RNA. The protein is Small ribosomal subunit protein bS6 of Magnetococcus marinus (strain ATCC BAA-1437 / JCM 17883 / MC-1).